The chain runs to 496 residues: Cytochrome P450 71B1 (496 aa).

Residue C436 coordinates heme.

It belongs to the cytochrome P450 family. Heme is required as a cofactor.

The sequence is that of Cytochrome P450 71B1 (CYP71B1) from Thlaspi arvense (Field penny-cress).